A 67-amino-acid polypeptide reads, in one-letter code: Coiled-coil domain-containing protein 179 (67 aa).

Disordered regions lie at residues 1–32 and 47–67; these read MCLRVKDEEPAQVYPEGPRRHHPSDVSTRQSV and RKLGKRFARPNPIPDTGILWT. Residues 27–53 adopt a coiled-coil conformation; that stretch reads STRQSVEKRINYMQNLQKEKRKLGKRF.

This chain is Coiled-coil domain-containing protein 179 (Ccdc179), found in Mus musculus (Mouse).